The primary structure comprises 81 residues: Protein Vpu (81 aa).

Residues 1-7 lie on the Extracellular side of the membrane; the sequence is MQSLQIL. The chain crosses the membrane as a helical span at residues 8 to 28; sequence AIVSLVVVAIIAIVVWTIVLI. Over 29 to 81 the chain is Cytoplasmic; sequence EYRKILRQRKIDRLFDRIREKAEDSGNESERDQEELSALVEMGHLAPWDVDDL. Phosphoserine; by host CK2 is present on residues serine 53 and serine 57.

This sequence belongs to the HIV-1 VPU protein family. Homopentamer. Interacts with host CD4 and BRTC; these interactions induce proteasomal degradation of CD4. Interacts with host BST2; this interaction leads to the degradation of host BST2. Interacts with host FBXW11. Interacts with host AP1M1; this interaction plays a role in the mistrafficking and subsequent degradation of host BST2. Interacts with host RANBP2; this interaction allows Vpu to down-regulate host BLM sumoylation. Phosphorylated by host CK2. This phosphorylation is necessary for interaction with human BTRC and degradation of CD4.

It localises to the host membrane. Its activity is regulated as follows. Ion channel activity is inhibited by hexamethylene amiloride in vitro. Enhances virion budding by targeting host CD4 and Tetherin/BST2 to proteasome degradation. Degradation of CD4 prevents any unwanted premature interactions between viral Env and its host receptor CD4 in the endoplasmic reticulum. Degradation of antiretroviral protein Tetherin/BST2 is important for virion budding, as BST2 tethers new viral particles to the host cell membrane. Mechanistically, Vpu bridges either CD4 or BST2 to BTRC, a substrate recognition subunit of the Skp1/Cullin/F-box protein E3 ubiquitin ligase, induces their ubiquitination and subsequent proteasomal degradation. The alteration of the E3 ligase specificity by Vpu seems to promote the degradation of host IKBKB, leading to NF-kappa-B down-regulation and subsequent apoptosis. Acts as a viroporin that forms an oligomeric ion channel in membranes. Modulates the host DNA repair mechanisms to promote degradation of nuclear viral cDNA in cells that are already productively infected in order to suppress immune sensing and proviral hyper-integration (superinfection). Manipulates PML-NBs and modulates SUMOylation of host BLM protein thereby enhancing its DNA-end processing activity toward viral unintegrated linear DNA. Also inhibits RAD52-mediated homologous repair of viral cDNA, preventing the generation of dead-end circular forms of single copies of the long terminal repeat and permitting sustained nucleolytic attack. This Homo sapiens (Human) protein is Protein Vpu.